The chain runs to 350 residues: Small ribosomal subunit biogenesis GTPase RsgA (350 aa).

Residues 1-17 (MSKNKLSKGQQRRVNAN) show a composition bias toward polar residues. Residues 1–27 (MSKNKLSKGQQRRVNANHQRRLKTSAE) are disordered. The CP-type G domain occupies 104–273 (TSVLTRPDFY…VIDSPGVREF (170 aa)). GTP-binding positions include 160-163 (NKID) and 214-222 (GQSGVGKSS). Positions 297, 302, 304, and 310 each coordinate Zn(2+).

Belongs to the TRAFAC class YlqF/YawG GTPase family. RsgA subfamily. In terms of assembly, monomer. Associates with 30S ribosomal subunit, binds 16S rRNA. Zn(2+) is required as a cofactor.

Its subcellular location is the cytoplasm. Its function is as follows. One of several proteins that assist in the late maturation steps of the functional core of the 30S ribosomal subunit. Helps release RbfA from mature subunits. May play a role in the assembly of ribosomal proteins into the subunit. Circularly permuted GTPase that catalyzes slow GTP hydrolysis, GTPase activity is stimulated by the 30S ribosomal subunit. The protein is Small ribosomal subunit biogenesis GTPase RsgA of Salmonella dublin (strain CT_02021853).